A 221-amino-acid chain; its full sequence is Ribonuclease T (221 aa).

The 177-residue stretch at 20-196 (VVVDLETGGF…YDTERTAELF (177 aa)) folds into the Exonuclease domain. Residues Asp23, Glu25, His183, and Asp188 each contribute to the Mg(2+) site. His183 serves as the catalytic Proton donor/acceptor.

This sequence belongs to the RNase T family. As to quaternary structure, homodimer. It depends on Mg(2+) as a cofactor.

In terms of biological role, trims short 3' overhangs of a variety of RNA species, leaving a one or two nucleotide 3' overhang. Responsible for the end-turnover of tRNA: specifically removes the terminal AMP residue from uncharged tRNA (tRNA-C-C-A). Also appears to be involved in tRNA biosynthesis. In Chromohalobacter salexigens (strain ATCC BAA-138 / DSM 3043 / CIP 106854 / NCIMB 13768 / 1H11), this protein is Ribonuclease T.